A 741-amino-acid polypeptide reads, in one-letter code: Catalase-peroxidase 2 (741 aa).

Residues 1-28 (MQKKRVGKSVVAALAIIAMSAGTVAAWA) form the signal peptide. The tryptophyl-tyrosyl-methioninium (Trp-Tyr) (with M-254) cross-link spans 107 to 228 (WHGAGTYRTY…LAATQMGLIY (122 aa)). The active-site Proton acceptor is His108. Residues 228–254 (YVNPEGPNGNPDPVAAAKDIRDAFGRM) constitute a cross-link (tryptophyl-tyrosyl-methioninium (Tyr-Met) (with W-107)). Position 269 (His269) interacts with heme b.

It belongs to the peroxidase family. Peroxidase/catalase subfamily. As to quaternary structure, homodimer or homotetramer. Requires heme b as cofactor. In terms of processing, formation of the three residue Trp-Tyr-Met cross-link is important for the catalase, but not the peroxidase activity of the enzyme.

It catalyses the reaction H2O2 + AH2 = A + 2 H2O. The enzyme catalyses 2 H2O2 = O2 + 2 H2O. In terms of biological role, bifunctional enzyme with both catalase and broad-spectrum peroxidase activity. The protein is Catalase-peroxidase 2 of Burkholderia ambifaria (strain ATCC BAA-244 / DSM 16087 / CCUG 44356 / LMG 19182 / AMMD) (Burkholderia cepacia (strain AMMD)).